A 1641-amino-acid polypeptide reads, in one-letter code: Ophiophagus venom factor (1641 aa).

The signal sequence occupies residues 1–22 (MEGMALYLVAALLIGFPGSSHG). N-linked (GlcNAc...) asparagine glycans are attached at residues N181 and N209. The Mg(2+) site is built by P507, D530, V531, and D533. 12 disulfide bridges follow: C535/C796, C604/C639, C672/C699, C673/C706, C686/C707, C852/C1491, C1336/C1467, C1367/C1436, C1484/C1489, C1496/C1568, C1515/C1639, and C1615/C1624. Positions 645–728 (RRRRSSVLLL…WESGLFLPRN (84 aa)) are excised as a propeptide. A C3a-like domain region spans residues 649 to 727 (SSVLLLDSKA…QWESGLFLPR (79 aa)). The region spanning 672-707 (CCEDSMHENPMGYTCEKRAKYIQEGDACKAAFLECC) is the Anaphylatoxin-like domain. Residues 731-742 (EDGFIQDSDIIP) are factor B binding site. Positions 981 to 1259 (HLIITPSGCG…VMLFQALAEY (279 aa)) are excised as a propeptide. A C3d-like domain region spans residues 981-1259 (HLIITPSGCG…VMLFQALAEY (279 aa)). The isoglutamyl cysteine thioester (Cys-Gln) cross-link spans 989-992 (CGEQ). Positions 1186–1249 (VLMAASTGKN…GGTYGQTQAT (64 aa)) are factor H binding site. Residues 1496 to 1639 (CSLLSQQEKI…LSNILTIFGC (144 aa)) form the NTR domain.

The protein belongs to the venom complement C3 homolog family. As to quaternary structure, heterotrimer of alpha, beta and gamma chains; disulfide-linked. May be active with factor B in the presence of factor D. In terms of processing, first processed by the removal of 4 Arg residues by furin-type protease, forming two chains, alpha and gamma/beta precursor, linked by a disulfide bond. Probably, a cobrin-like protease cleaves the C3a-like domain and then the C3d-like domain, generating the mature venom factor (OVF). Post-translationally, the beta chain is not glycosylated. Expressed by the venom gland.

It localises to the secreted. Its function is as follows. Complement-activating protein in cobra venom. It is a structural and functional analog of complement component C3b, the activated form of C3. It binds factor B (CFB), which is subsequently cleaved by factor D (CFD) to form the bimolecular complex OVF/Bb. OVF/Bb is a C3/C5 convertase that cleaves both complement components C3 and C5. Structurally, it resembles the C3b degradation product C3c, which is not able to form a C3/C5 convertase. Unlike C3b/Bb, OVF/Bb is a stable complex and completely resistant to the actions of complement regulatory factors H (CFH) and I (CFI). Therefore, OVF continuously activates complement. As a result, OVF exhibits complement-depleting activity. This is Ophiophagus venom factor from Ophiophagus hannah (King cobra).